The chain runs to 400 residues: Riboflavin biosynthesis protein RibBA (400 aa).

Positions 1-202 (MTTFGTIEQA…IADLVMYRRR (202 aa)) are DHBP synthase. Residues 28–29 (RE), Asp-33, 141–145 (RTGHT), and Glu-165 each bind D-ribulose 5-phosphate. Glu-29 contacts Mg(2+). Residue His-144 participates in Mg(2+) binding. A GTP cyclohydrolase II region spans residues 203–400 (TEKQVELVAE…KRDRMGHLLG (198 aa)). 253-257 (RAHSE) contributes to the GTP binding site. Cys-258, Cys-269, and Cys-271 together coordinate Zn(2+). GTP-binding positions include Gln-274, 297–299 (EGR), and Thr-319. The active-site Proton acceptor; for GTP cyclohydrolase activity is the Asp-331. Arg-333 functions as the Nucleophile; for GTP cyclohydrolase activity in the catalytic mechanism. 2 residues coordinate GTP: Thr-354 and Lys-359.

In the N-terminal section; belongs to the DHBP synthase family. It in the C-terminal section; belongs to the GTP cyclohydrolase II family. The cofactor is Mg(2+). Mn(2+) is required as a cofactor. It depends on Zn(2+) as a cofactor.

It carries out the reaction D-ribulose 5-phosphate = (2S)-2-hydroxy-3-oxobutyl phosphate + formate + H(+). It catalyses the reaction GTP + 4 H2O = 2,5-diamino-6-hydroxy-4-(5-phosphoribosylamino)-pyrimidine + formate + 2 phosphate + 3 H(+). It participates in cofactor biosynthesis; riboflavin biosynthesis; 2-hydroxy-3-oxobutyl phosphate from D-ribulose 5-phosphate: step 1/1. Its pathway is cofactor biosynthesis; riboflavin biosynthesis; 5-amino-6-(D-ribitylamino)uracil from GTP: step 1/4. Catalyzes the conversion of D-ribulose 5-phosphate to formate and 3,4-dihydroxy-2-butanone 4-phosphate. Functionally, catalyzes the conversion of GTP to 2,5-diamino-6-ribosylamino-4(3H)-pyrimidinone 5'-phosphate (DARP), formate and pyrophosphate. This Salinispora tropica (strain ATCC BAA-916 / DSM 44818 / JCM 13857 / NBRC 105044 / CNB-440) protein is Riboflavin biosynthesis protein RibBA.